Consider the following 278-residue polypeptide: Embryonic polyadenylate-binding protein 2 (278 aa).

2 disordered regions span residues 21–66 (VSSD…GDAG) and 101–128 (EGTP…LSPE). The span at 35–50 (ETKEILGPEGGEGKEE) shows a compositional bias: basic and acidic residues. Over residues 51–63 (KEEEEDAEEDQDG) the composition is skewed to acidic residues. The 78-residue stretch at 147 to 224 (RSVYVGNVDY…RVIKVLPKRT (78 aa)) folds into the RRM domain. Positions 227–278 (PGISSTDRGGLRGHPGSRGAPFPHSGLQGRPRLRPQGQNRARGKFSPWFSPY) are disordered.

In terms of tissue distribution, expressed in various adult tissues.

The protein localises to the cytoplasm. Binds the poly(A) tail of mRNA. This Homo sapiens (Human) protein is Embryonic polyadenylate-binding protein 2 (PABPN1L).